Here is a 156-residue protein sequence, read N- to C-terminus: 6,7-dimethyl-8-ribityllumazine synthase (156 aa).

5-amino-6-(D-ribitylamino)uracil is bound by residues phenylalanine 23, 57 to 59 (AYE), and 81 to 83 (AII). 86–87 (GT) provides a ligand contact to (2S)-2-hydroxy-3-oxobutyl phosphate. Histidine 89 acts as the Proton donor in catalysis. Phenylalanine 114 is a 5-amino-6-(D-ribitylamino)uracil binding site. Arginine 128 is a binding site for (2S)-2-hydroxy-3-oxobutyl phosphate.

Belongs to the DMRL synthase family.

It carries out the reaction (2S)-2-hydroxy-3-oxobutyl phosphate + 5-amino-6-(D-ribitylamino)uracil = 6,7-dimethyl-8-(1-D-ribityl)lumazine + phosphate + 2 H2O + H(+). The protein operates within cofactor biosynthesis; riboflavin biosynthesis; riboflavin from 2-hydroxy-3-oxobutyl phosphate and 5-amino-6-(D-ribitylamino)uracil: step 1/2. In terms of biological role, catalyzes the formation of 6,7-dimethyl-8-ribityllumazine by condensation of 5-amino-6-(D-ribitylamino)uracil with 3,4-dihydroxy-2-butanone 4-phosphate. This is the penultimate step in the biosynthesis of riboflavin. This Helicobacter pylori (strain J99 / ATCC 700824) (Campylobacter pylori J99) protein is 6,7-dimethyl-8-ribityllumazine synthase.